A 295-amino-acid chain; its full sequence is ATP synthase gamma chain (295 aa).

Belongs to the ATPase gamma chain family. As to quaternary structure, F-type ATPases have 2 components, CF(1) - the catalytic core - and CF(0) - the membrane proton channel. CF(1) has five subunits: alpha(3), beta(3), gamma(1), delta(1), epsilon(1). CF(0) has three main subunits: a, b and c.

The protein localises to the cell inner membrane. Functionally, produces ATP from ADP in the presence of a proton gradient across the membrane. The gamma chain is believed to be important in regulating ATPase activity and the flow of protons through the CF(0) complex. The polypeptide is ATP synthase gamma chain (Bdellovibrio bacteriovorus (strain ATCC 15356 / DSM 50701 / NCIMB 9529 / HD100)).